The primary structure comprises 29 residues: ATP synthase subunit 9, mitochondrial (29 aa).

It belongs to the ATPase C chain family. In terms of assembly, F-type ATPases have 2 components, CF(1) - the catalytic core - and CF(0) - the membrane proton channel. CF(1) has five subunits: alpha(3), beta(3), gamma(1), delta(1), epsilon(1). CF(0) has three main subunits: a, b and c.

It is found in the mitochondrion membrane. Its function is as follows. Mitochondrial membrane ATP synthase (F(1)F(0) ATP synthase or Complex V) produces ATP from ADP in the presence of a proton gradient across the membrane which is generated by electron transport complexes of the respiratory chain. F-type ATPases consist of two structural domains, F(1) - containing the extramembraneous catalytic core and F(0) - containing the membrane proton channel, linked together by a central stalk and a peripheral stalk. During catalysis, ATP synthesis in the catalytic domain of F(1) is coupled via a rotary mechanism of the central stalk subunits to proton translocation. Part of the complex F(0) domain. A homomeric c-ring of probably 10 subunits is part of the complex rotary element. This Wickerhamomyces pijperi (Yeast) protein is ATP synthase subunit 9, mitochondrial (ATP9).